The chain runs to 345 residues: Calcium uniporter regulatory subunit MCUb, mitochondrial (345 aa).

A mitochondrion-targeting transit peptide spans 1-44 (MPGALSGRRMLPSGLCLGRWQLLRTIRARGRGDPRELPSTPQVL). Residues 188–221 (EIQKRRERHLMAKIDHLQEQLRPLEQVKAAIEAR) adopt a coiled-coil conformation. 2 consecutive transmembrane segments (helical) span residues 229–249 (LLWA…WLTW) and 259–279 (PVTF…FIIT). A coiled-coil region spans residues 306–334 (FDVEQYNKLKEDLAEATESLESVRRSLRL).

It belongs to the MCU (TC 1.A.77) family. Homooligomer. Associates with the uniplex complex, composed of MCU, MICU1, MICU2 and EMRE/SMDT1, inhibiting its activity. In terms of tissue distribution, detected in lung, brain and heart, and at lower levels in white fat, skeletal muscle and spleen. Detected at very low levels in kidney and liver. Highly expressed in macrophages during the progression of skeletal muscle regeneration.

The protein resides in the mitochondrion inner membrane. In terms of biological role, negative regulator of the mitochondrial calcium uniporter (MCU), a channel that mediates calcium uptake into the mitochondrial matrix. MCUB is required to limit mitochondrial calcium overload during stress. Acts as a dominant-negative regulator that displaces MCU from the functional uniplex complex and thereby decreases the association of calcium sensors MICU1 and MICU2, preventing channel gating. Mitochondrial calcium homeostasis plays key roles in mitochondrial metabolism. Acts as an important regulator of mitochondrial metabolism in response to stress in muscle cells: induced in response to fasting, leading to restrict mitochondrial calcium uptake, resulting in reprogramming of mitochondria toward fatty acid oxidation preference. Acts as a regulator of macrophage polarization during skeletal muscle regeneration: inhibition of mitochondrial calcium uptake drives differentiation of macrophages with anti-inflammatory profile, promoting the differentiation and fusion of satellite cells. The sequence is that of Calcium uniporter regulatory subunit MCUb, mitochondrial from Mus musculus (Mouse).